The following is a 312-amino-acid chain: Olfactory receptor 2H2 (312 aa).

Residues 1–23 lie on the Extracellular side of the membrane; sequence MVNQSSTPGFLLLGFSEHPGLER. The N-linked (GlcNAc...) asparagine glycan is linked to Asn-3. The helical transmembrane segment at 24–47 threads the bilayer; the sequence is TLFVVVLTSYLLTLVGNTLIILLS. Topologically, residues 48-55 are cytoplasmic; that stretch reads ALDPKLHS. Residues 56-77 traverse the membrane as a helical segment; that stretch reads PMYFFLSNLSFLDLCFTTSCVP. Topologically, residues 78 to 98 are extracellular; the sequence is QMLVNLWGPKKTISFLDCSVQ. Cys-95 and Cys-187 are disulfide-bonded. Residues 99-118 traverse the membrane as a helical segment; it reads IFIFLSLGTTECILLTVMAF. The Cytoplasmic segment spans residues 119–137; it reads DRYVAVCQPLHYATIIHPR. The helical transmembrane segment at 138–156 threads the bilayer; that stretch reads LCWQLASVAWVIGLVESVV. Residues 157 to 193 are Extracellular-facing; the sequence is QTPSTLHLPFCPDRQVDDFVCEVPALIRLSCEDTSYN. The helical transmembrane segment at 194 to 217 threads the bilayer; the sequence is EIQVAVASVFILVVPLSLILVSYG. Residues 218-234 lie on the Cytoplasmic side of the membrane; sequence AITWAVLRINSAKGRRK. The chain crosses the membrane as a helical span at residues 235–257; it reads AFGTCSSHLTVVTLFYSSVIAVY. Over 258–270 the chain is Extracellular; sequence LQPKNPYAQERGK. A helical membrane pass occupies residues 271-290; it reads FFGLFYAVGTPSLNPLIYTL. The Cytoplasmic portion of the chain corresponds to 291–312; it reads RNKEVTRAFRRLLGKEMGLTQS.

This sequence belongs to the G-protein coupled receptor 1 family.

Its subcellular location is the cell membrane. Its function is as follows. Odorant receptor. In Homo sapiens (Human), this protein is Olfactory receptor 2H2 (OR2H2).